Consider the following 350-residue polypeptide: MENNILELRNVTKDYDGKVVLKGIDLNIKEGEFITLLGPSGCGKTTTLRIVAGFEKPNSGQIMFEGKDLLPIPINKRQFNTIFQSYALFPHLNVFDNIAFGLRTKKTKKDILQREVLKQIRQVGLEGFEDRNINDLSGGQKQRVAIARALVMKPKVLLLDEPLAALDVQLRQHMREELKRLQREIGITFLMVSHDQEEALSISDRVVVMNEGSIQQIGTPEDIYNEPENLWVAKFIGQSNIIEDGIFIEDNKVQIDGKTFVCDDTNFGENEKSIDIVIRPEDIEIKKTNAGFFNGTVMHTTFKGVHWELLVETTKKRIWKIHTTQAFKVDDKVSIKWNDEAIHVMWKEVE.

In terms of domain architecture, ABC transporter spans 6-236 (LELRNVTKDY…PENLWVAKFI (231 aa)). 38–45 (GPSGCGKT) is an ATP binding site.

This sequence belongs to the ABC transporter superfamily. Spermidine/putrescine importer (TC 3.A.1.11.1) family. The complex is composed of two ATP-binding proteins (PotA), two transmembrane proteins (PotB and PotC) and a solute-binding protein (PotD).

It localises to the cell membrane. It catalyses the reaction ATP + H2O + polyamine-[polyamine-binding protein]Side 1 = ADP + phosphate + polyamineSide 2 + [polyamine-binding protein]Side 1.. In terms of biological role, part of the ABC transporter complex PotABCD involved in spermidine/putrescine import. Responsible for energy coupling to the transport system. The protein is Spermidine/putrescine import ATP-binding protein PotA of Mesoplasma florum (strain ATCC 33453 / NBRC 100688 / NCTC 11704 / L1) (Acholeplasma florum).